Here is a 142-residue protein sequence, read N- to C-terminus: Putative pre-16S rRNA nuclease (142 aa).

It belongs to the YqgF nuclease family.

It is found in the cytoplasm. Could be a nuclease involved in processing of the 5'-end of pre-16S rRNA. The sequence is that of Putative pre-16S rRNA nuclease from Blochmanniella floridana.